The chain runs to 374 residues: 12-oxophytodienoate reductase 2 (374 aa).

Met1 bears the N-acetylmethionine mark. FMN is bound by residues 33–35, Ala66, and Gln108; that span reads PLT. A substrate-binding site is contributed by His185. The active-site Proton donor is Tyr190. Residue Arg237 participates in FMN binding. Arg277 is a binding site for substrate. FMN is bound by residues 305–307 and 328–329; these read AGG and GR.

The protein belongs to the NADH:flavin oxidoreductase/NADH oxidase family. It depends on FMN as a cofactor. In terms of tissue distribution, expressed at highest levels in roots and cotyledons, and at lower levels in leaves, shoots and flowers (sepals, petals, maturing siliques and developing pollen).

It localises to the cytoplasm. The enzyme catalyses (1S,2S)-OPC-8 + NADP(+) = (9S,13S,15Z)-12-oxophyto-10,15-dienoate + NADPH + H(+). It catalyses the reaction a 4,5-didehydrojasmonate + NADPH + H(+) = a jasmonate + NADP(+). The protein operates within lipid metabolism; oxylipin biosynthesis. In terms of biological role, specifically cleaves olefinic bonds in alpha,beta-unsaturated carbonyls and may be involved in detoxification or modification of these reactive compounds. May be involved in the biosynthesis or metabolism of oxylipin signaling molecules. In vitro, reduces 9R,13R-12-oxophytodienoic acid (9R,13R-OPDA) to 9R,13R-OPC-8:0, but only poorly 9S,13S-OPDA, the natural precursor of jasmonic acid (JA). Can detoxify the explosive 2,4,6-trinitrotoluene (TNT) in vitro and in vivo by catalyzing its nitroreduction to form hydroxylamino-dinitrotoluene (HADNT). Functions in an alternative and OPR3-independent pathway for JA biosynthesis. Catalyzes the NADPH-dependent reduction of 4,5-didehydrojasmonates to jasmonates. The chain is 12-oxophytodienoate reductase 2 from Arabidopsis thaliana (Mouse-ear cress).